A 144-amino-acid polypeptide reads, in one-letter code: Large ribosomal subunit protein uL15 (144 aa).

Positions 1–53 are disordered; the sequence is MRLNTLSPAEGAKHAPKRVGRGIGSGLGKTAGRGHKGQNSRSGGGVRRGFEGG. A compositionally biased stretch (gly residues) spans 21–31; that stretch reads RGIGSGLGKTA.

Belongs to the universal ribosomal protein uL15 family. In terms of assembly, part of the 50S ribosomal subunit.

In terms of biological role, binds to the 23S rRNA. This is Large ribosomal subunit protein uL15 from Serratia proteamaculans (strain 568).